The chain runs to 320 residues: Probable cysteine protease atg4 (320 aa).

Cysteine 74 acts as the Nucleophile in catalysis. Catalysis depends on residues aspartate 232 and histidine 234.

Belongs to the peptidase C54 family.

It is found in the cytoplasm. The protein resides in the nucleus. Its subcellular location is the preautophagosomal structure. The catalysed reaction is [protein]-C-terminal L-amino acid-glycyl-phosphatidylethanolamide + H2O = [protein]-C-terminal L-amino acid-glycine + a 1,2-diacyl-sn-glycero-3-phosphoethanolamine. In terms of biological role, cysteine protease that plays a key role in cytoplasm to vacuole transport (Cvt) and autophagy by mediating both proteolytic activation and delipidation of atg8. Required for selective autophagic degradation of the nucleus (nucleophagy) as well as for mitophagy which contributes to regulate mitochondrial quantity and quality by eliminating the mitochondria to a basal level to fulfill cellular energy requirements and preventing excess ROS production. The protease activity is required for proteolytic activation of atg8: cleaves the C-terminal amino acid of atg8 to reveal a C-terminal glycine. Atg8 ubiquitin-like activity requires the exposure of the glycine at the C-terminus for its conjugation to phosphatidylethanolamine (PE) and its insertion to membranes, which is necessary for autophagy. The atg8-PE conjugate mediates tethering between adjacent membranes and stimulates membrane hemifusion, leading to expansion of the autophagosomal membrane during autophagy. In addition to the protease activity, also catalyzes deconjugation of PE-conjugated forms of atg8 during macroautophagy: atg8 delipidation is required to release the protein from membranes, which facilitates multiple events during macroautophagy, and especially for efficient autophagosome biogenesis, the assembly of atg9-containing tubulovesicular clusters into phagophores/autophagosomes, and for the disassembly of PAS-associated ATG components. Atg8 delipidation by atg4 also recycles atg8-PE generated on inappropriate membranes to maintain a reservoir of unlipidated atg8 that is required for autophagosome formation at the PAS. Plays a role in meiosis and sporulation. This is Probable cysteine protease atg4 (atg4) from Schizosaccharomyces pombe (strain 972 / ATCC 24843) (Fission yeast).